Reading from the N-terminus, the 304-residue chain is Acetylglutamate kinase (304 aa).

Substrate-binding positions include 82-83 (GG), R104, and N197.

The protein belongs to the acetylglutamate kinase family. ArgB subfamily.

The protein resides in the cytoplasm. It catalyses the reaction N-acetyl-L-glutamate + ATP = N-acetyl-L-glutamyl 5-phosphate + ADP. It functions in the pathway amino-acid biosynthesis; L-arginine biosynthesis; N(2)-acetyl-L-ornithine from L-glutamate: step 2/4. Its function is as follows. Catalyzes the ATP-dependent phosphorylation of N-acetyl-L-glutamate. The polypeptide is Acetylglutamate kinase (Prochlorococcus marinus (strain NATL2A)).